We begin with the raw amino-acid sequence, 415 residues long: Probable peptidoglycan glycosyltransferase FtsW (415 aa).

11 consecutive transmembrane segments (helical) span residues 31 to 51, 63 to 83, 97 to 117, 133 to 153, 162 to 182, 185 to 205, 206 to 226, 245 to 265, 285 to 305, 326 to 346, and 361 to 381; these read PILMVAVLALLAWGLVMVTSA, FFFVIRQTIAVVIGASITVWL, LWILIASLLLLLVVLLPGIGH, IQVSEFARLGLIIWMAGYIAT, ITGMLGPGVVIFAASLLLLLQ, FGTTAVLAATLFAMAWLARAQ, WQMMVGSTLVMGVLGVFVVLS, FGHGYQLANALIAIGTGGVWG, FIFAVLAEELGLIGVIALIGL, IAGAALAWGISVWIGMQALIN, and LPLMSYGGSAMIVALISLGFL.

The protein belongs to the SEDS family. FtsW subfamily.

Its subcellular location is the cell inner membrane. It carries out the reaction [GlcNAc-(1-&gt;4)-Mur2Ac(oyl-L-Ala-gamma-D-Glu-L-Lys-D-Ala-D-Ala)](n)-di-trans,octa-cis-undecaprenyl diphosphate + beta-D-GlcNAc-(1-&gt;4)-Mur2Ac(oyl-L-Ala-gamma-D-Glu-L-Lys-D-Ala-D-Ala)-di-trans,octa-cis-undecaprenyl diphosphate = [GlcNAc-(1-&gt;4)-Mur2Ac(oyl-L-Ala-gamma-D-Glu-L-Lys-D-Ala-D-Ala)](n+1)-di-trans,octa-cis-undecaprenyl diphosphate + di-trans,octa-cis-undecaprenyl diphosphate + H(+). The protein operates within cell wall biogenesis; peptidoglycan biosynthesis. Functionally, peptidoglycan polymerase that is essential for cell division. The polypeptide is Probable peptidoglycan glycosyltransferase FtsW (Halothiobacillus neapolitanus (strain ATCC 23641 / c2) (Thiobacillus neapolitanus)).